The chain runs to 97 residues: MDITDIRIKKVESKNSGSKLLAYVAVTFDNCLVLHNIRVIKGQKGVFIAMPNRRTRVGEYKDIVHPISQDFRKTLQTSIFKEYIRENPADLELELDF.

It belongs to the SpoVG family.

Functionally, could be involved in septation. This Borrelia garinii subsp. bavariensis (strain ATCC BAA-2496 / DSM 23469 / PBi) (Borreliella bavariensis) protein is Putative septation protein SpoVG.